We begin with the raw amino-acid sequence, 183 residues long: Adenine phosphoribosyltransferase (183 aa).

This sequence belongs to the purine/pyrimidine phosphoribosyltransferase family. In terms of assembly, homodimer.

Its subcellular location is the cytoplasm. It catalyses the reaction AMP + diphosphate = 5-phospho-alpha-D-ribose 1-diphosphate + adenine. It functions in the pathway purine metabolism; AMP biosynthesis via salvage pathway; AMP from adenine: step 1/1. Its function is as follows. Catalyzes a salvage reaction resulting in the formation of AMP, that is energically less costly than de novo synthesis. The chain is Adenine phosphoribosyltransferase from Salmonella typhi.